The primary structure comprises 460 residues: Cysteine--tRNA ligase (460 aa).

Cysteine 28 is a Zn(2+) binding site. The 'HIGH' region signature appears at 30 to 40 (MTVYDYCHLGH). 3 residues coordinate Zn(2+): cysteine 209, histidine 234, and glutamate 238. The 'KMSKS' region motif lies at 266 to 270 (KMSKS). Lysine 269 is an ATP binding site.

Belongs to the class-I aminoacyl-tRNA synthetase family. Monomer. Zn(2+) serves as cofactor.

The protein localises to the cytoplasm. It carries out the reaction tRNA(Cys) + L-cysteine + ATP = L-cysteinyl-tRNA(Cys) + AMP + diphosphate. This chain is Cysteine--tRNA ligase, found in Pseudomonas syringae pv. syringae (strain B728a).